Reading from the N-terminus, the 599-residue chain is Aspartate--tRNA(Asp/Asn) ligase (599 aa).

E169 contributes to the L-aspartate binding site. The aspartate stretch occupies residues 193 to 196 (QLFK). R215 provides a ligand contact to L-aspartate. ATP-binding positions include 215–217 (RDE) and Q224. H447 is a binding site for L-aspartate. Position 481 (E481) interacts with ATP. L-aspartate is bound at residue R488. 533 to 536 (GWDR) lines the ATP pocket.

This sequence belongs to the class-II aminoacyl-tRNA synthetase family. Type 1 subfamily. As to quaternary structure, homodimer.

The protein localises to the cytoplasm. The enzyme catalyses tRNA(Asx) + L-aspartate + ATP = L-aspartyl-tRNA(Asx) + AMP + diphosphate. Its function is as follows. Aspartyl-tRNA synthetase with relaxed tRNA specificity since it is able to aspartylate not only its cognate tRNA(Asp) but also tRNA(Asn). Reaction proceeds in two steps: L-aspartate is first activated by ATP to form Asp-AMP and then transferred to the acceptor end of tRNA(Asp/Asn). This chain is Aspartate--tRNA(Asp/Asn) ligase, found in Pseudarthrobacter chlorophenolicus (strain ATCC 700700 / DSM 12829 / CIP 107037 / JCM 12360 / KCTC 9906 / NCIMB 13794 / A6) (Arthrobacter chlorophenolicus).